Consider the following 239-residue polypeptide: 7-cyano-7-deazaguanine synthase (239 aa).

An ATP-binding site is contributed by 13–23 (LSGGQDSATCL). Zn(2+) contacts are provided by Cys-199, Cys-214, Cys-217, and Cys-220.

It belongs to the QueC family. Zn(2+) is required as a cofactor.

The enzyme catalyses 7-carboxy-7-deazaguanine + NH4(+) + ATP = 7-cyano-7-deazaguanine + ADP + phosphate + H2O + H(+). It participates in purine metabolism; 7-cyano-7-deazaguanine biosynthesis. Functionally, catalyzes the ATP-dependent conversion of 7-carboxy-7-deazaguanine (CDG) to 7-cyano-7-deazaguanine (preQ(0)). This is 7-cyano-7-deazaguanine synthase from Acidovorax ebreus (strain TPSY) (Diaphorobacter sp. (strain TPSY)).